Consider the following 214-residue polypeptide: Ras-like protein rasZ (214 aa).

Gly-16–Thr-23 serves as a coordination point for GTP. The short motif at Tyr-38 to Tyr-46 is the Effector region element. GTP-binding positions include Asp-63–Gln-67 and Asn-122–Asp-125. Position 211 is a cysteine methyl ester (Cys-211). Cys-211 carries S-geranylgeranyl cysteine lipidation. Positions Lys-212–Met-214 are cleaved as a propeptide — removed in mature form.

The protein belongs to the small GTPase superfamily. Ras family.

It localises to the cell membrane. It carries out the reaction GTP + H2O = GDP + phosphate + H(+). In terms of biological role, ras proteins bind GDP/GTP and possess intrinsic GTPase activity. The polypeptide is Ras-like protein rasZ (rasZ) (Dictyostelium discoideum (Social amoeba)).